Consider the following 488-residue polypeptide: Germacrene A hydroxylase (488 aa).

The Cytoplasmic segment spans residues 1 to 6; it reads MELSFT. A helical; Signal-anchor for type II membrane protein transmembrane segment spans residues 7–23; it reads TSIAVATIVFVLFKLAT. Residues 24–488 lie on the Lumenal side of the membrane; it reads RPKSNKKLLP…KTHLVLVPSF (465 aa). N-linked (GlcNAc...) asparagine glycans are attached at residues N255, N260, and N379. C432 is a binding site for heme.

The protein belongs to the cytochrome P450 family. Heme serves as cofactor.

The protein localises to the endoplasmic reticulum membrane. It carries out the reaction (+)-(R)-germacrene A + 3 reduced [NADPH--hemoprotein reductase] + 3 O2 = germacra-1(10),4,11(13)-trien-12-oate + 3 oxidized [NADPH--hemoprotein reductase] + 4 H2O + 4 H(+). The protein operates within secondary metabolite biosynthesis; terpenoid biosynthesis. Functionally, involved in the biosynthesis of germacrene-derived sesquiterpene lactones. Catalyzes three consecutive oxidations of germacrene A to produce germacrene A acid. Could also catalyze the three-step oxidation of non-natural substrate amorphadiene to artemisinic acid. The polypeptide is Germacrene A hydroxylase (Saussurea costus (Costus)).